Consider the following 864-residue polypeptide: Leukocyte tyrosine kinase receptor (864 aa).

A signal peptide spans 1 to 16 (MGCWGQLLVWFGAAGA). At 17-424 (ILCSSPGSQE…CMDLHKPPGP (408 aa)) the chain is on the extracellular side. Over residues 30–40 (RSSPLPLASPS) the composition is skewed to low complexity. Positions 30 to 64 (RSSPLPLASPSPRDPKVSAPPSILEPASPLNSPGT) are disordered. Disulfide bonds link cysteine 73/cysteine 86 and cysteine 168/cysteine 179. The interval 239-297 (YLRPRDRGRTQASPEKLENRSEAPGSGGRGGAAGGGGGWTSRAPSPQAGRSLQEGAEGG) is disordered. Residues 241 to 259 (RPRDRGRTQASPEKLENRS) are compositionally biased toward basic and acidic residues. N-linked (GlcNAc...) asparagine glycosylation occurs at asparagine 257. The segment covering 263-277 (GSGGRGGAAGGGGGW) has biased composition (gly residues). Cysteines 300 and 322 form a disulfide. 2 N-linked (GlcNAc...) asparagine glycosylation sites follow: asparagine 380 and asparagine 412. The helical transmembrane segment at 425 to 449 (LVLMVAVVATSTLSLLMVCGVLILV) threads the bilayer. The Cytoplasmic portion of the chain corresponds to 450 to 864 (KQKKWQGLQE…QNLWNPTYRS (415 aa)). The region spanning 510–786 (VTLLRALGHG…LQYCTQDPDV (277 aa)) is the Protein kinase domain. ATP contacts are provided by residues 516 to 524 (LGHGAFGEV) and lysine 544. The Proton acceptor role is filled by aspartate 643. Phosphotyrosine; by autocatalysis is present on tyrosine 676. 2 disordered regions span residues 790 to 830 (LLPM…KLKS) and 842 to 864 (SGLK…TYRS). The span at 852–864 (LQPQNLWNPTYRS) shows a compositional bias: polar residues.

The protein belongs to the protein kinase superfamily. Tyr protein kinase family. Insulin receptor subfamily. Homodimer; homodimerizes following ligand-binding. Part of a complex including LTK, TNK2 and GRB2, in which GRB2 promotes LTK recruitment by TNK2. Post-translationally, phosphorylated at tyrosine residues by autocatalysis, which activates kinase activity. In terms of tissue distribution, expressed in non-hematopoietic cell lines and T- and B-cell lines.

It localises to the cell membrane. The enzyme catalyses L-tyrosyl-[protein] + ATP = O-phospho-L-tyrosyl-[protein] + ADP + H(+). With respect to regulation, activated by ligand-binding, leading to homodimerization and autophosphorylation. In terms of biological role, receptor with a tyrosine-protein kinase activity. Following activation by ALKAL1 or ALKAL2 ligands at the cell surface, transduces an extracellular signal into an intracellular response. Ligand-binding to the extracellular domain induces tyrosine kinase activation, leading to activation of the mitogen-activated protein kinase (MAPK) pathway. Phosphorylates almost exclusively at the first tyrosine of the Y-x-x-x-Y-Y motif. The exact function of this protein is not known; studies with chimeric proteins demonstrate its ability to promote growth and specifically neurite outgrowth, and cell survival. Involved in regulation of the secretory pathway involving endoplasmic reticulum (ER) export sites (ERESs) and ER to Golgi transport. The chain is Leukocyte tyrosine kinase receptor from Homo sapiens (Human).